Here is a 272-residue protein sequence, read N- to C-terminus: Dermonecrotic toxin LvSicTox-alphaIC1aiii (272 aa).

Histidine 4 is a catalytic residue. Positions 24 and 26 each coordinate Mg(2+). Histidine 40 serves as the catalytic Nucleophile. Disulfide bonds link cysteine 44/cysteine 50 and cysteine 46/cysteine 189. Position 84 (aspartate 84) interacts with Mg(2+).

This sequence belongs to the arthropod phospholipase D family. Class II subfamily. Mg(2+) is required as a cofactor. In terms of tissue distribution, expressed by the venom gland.

It is found in the secreted. The enzyme catalyses an N-(acyl)-sphingosylphosphocholine = an N-(acyl)-sphingosyl-1,3-cyclic phosphate + choline. It carries out the reaction an N-(acyl)-sphingosylphosphoethanolamine = an N-(acyl)-sphingosyl-1,3-cyclic phosphate + ethanolamine. The catalysed reaction is a 1-acyl-sn-glycero-3-phosphocholine = a 1-acyl-sn-glycero-2,3-cyclic phosphate + choline. It catalyses the reaction a 1-acyl-sn-glycero-3-phosphoethanolamine = a 1-acyl-sn-glycero-2,3-cyclic phosphate + ethanolamine. Dermonecrotic toxins cleave the phosphodiester linkage between the phosphate and headgroup of certain phospholipids (sphingolipid and lysolipid substrates), forming an alcohol (often choline) and a cyclic phosphate. This toxin acts on sphingomyelin (SM). It may also act on ceramide phosphoethanolamine (CPE), lysophosphatidylcholine (LPC) and lysophosphatidylethanolamine (LPE), but not on lysophosphatidylserine (LPS), and lysophosphatidylglycerol (LPG). It acts by transphosphatidylation, releasing exclusively cyclic phosphate products as second products. Induces dermonecrosis, hemolysis, increased vascular permeability, edema, inflammatory response, and platelet aggregation. The polypeptide is Dermonecrotic toxin LvSicTox-alphaIC1aiii (Loxosceles variegata (Recluse spider)).